The primary structure comprises 213 residues: Probable GTP-binding protein EngB (213 aa).

The region spanning 25–203 (EGTEVAFAGR…EDVLNGWLLP (179 aa)) is the EngB-type G domain. GTP-binding positions include 33-40 (GRSNAGKS), 60-64 (GRTQL), 80-83 (DLPG), 147-150 (TKAD), and 179-184 (AQMFSA). 2 residues coordinate Mg(2+): S40 and T62.

The protein belongs to the TRAFAC class TrmE-Era-EngA-EngB-Septin-like GTPase superfamily. EngB GTPase family. Requires Mg(2+) as cofactor.

Necessary for normal cell division and for the maintenance of normal septation. In Saccharophagus degradans (strain 2-40 / ATCC 43961 / DSM 17024), this protein is Probable GTP-binding protein EngB.